The following is a 503-amino-acid chain: ATP synthase subunit alpha (503 aa).

169 to 176 contributes to the ATP binding site; sequence GDRQTGKT.

Belongs to the ATPase alpha/beta chains family. F-type ATPases have 2 components, CF(1) - the catalytic core - and CF(0) - the membrane proton channel. CF(1) has five subunits: alpha(3), beta(3), gamma(1), delta(1), epsilon(1). CF(0) has three main subunits: a(1), b(2) and c(9-12). The alpha and beta chains form an alternating ring which encloses part of the gamma chain. CF(1) is attached to CF(0) by a central stalk formed by the gamma and epsilon chains, while a peripheral stalk is formed by the delta and b chains.

The protein resides in the cell membrane. It catalyses the reaction ATP + H2O + 4 H(+)(in) = ADP + phosphate + 5 H(+)(out). Its function is as follows. Produces ATP from ADP in the presence of a proton gradient across the membrane. The alpha chain is a regulatory subunit. The polypeptide is ATP synthase subunit alpha (Macrococcus caseolyticus (strain JCSC5402) (Macrococcoides caseolyticum)).